The primary structure comprises 388 residues: P2X purinoceptor 4 (388 aa).

Residues 1–33 (MAGCCSVLGSFLFEYDTPRIVLIRSRKVGLMNR) lie on the Cytoplasmic side of the membrane. The chain crosses the membrane as a helical span at residues 34-54 (VVQLLILAYVIGWVFVWEKGY). Topologically, residues 55–338 (QETDSVVSSV…KFDIIPTMIN (284 aa)) are extracellular. Residues Lys-67 and Lys-69 each coordinate ATP. 2 residues coordinate CTP: Lys-67 and Lys-69. N-linked (GlcNAc...) asparagine glycosylation is found at Asn-75, Asn-110, Asn-131, Asn-153, and Asn-184. Intrachain disulfides connect Cys-116-Cys-165, Cys-126-Cys-149, and Cys-132-Cys-159. ATP contacts are provided by Thr-186 and Leu-188. Thr-186 lines the CTP pocket. Residues Asn-199 and Asn-208 are each glycosylated (N-linked (GlcNAc...) asparagine). 2 disulfide bridges follow: Cys-217/Cys-227 and Cys-261/Cys-270. 3 residues coordinate ATP: Asn-293, Arg-295, and Lys-313. Positions 293, 295, and 313 each coordinate CTP. The chain crosses the membrane as a helical span at residues 339 to 359 (VGSGLALLGVATVLCDVIVLY). The Cytoplasmic portion of the chain corresponds to 360 to 388 (CMKKRYYYRDKKYKYVEDYEQGLSGEMNQ).

It belongs to the P2X receptor family. Functional P2RXs are organized as homomeric and heteromeric trimers. Functional P2XRs are organized as homomeric and heteromeric trimers. Forms heterotrimer with P2RX1. Interacts with P2RX7 (via C-terminus); this interaction is functional only in the presence of ATP. Forms heterotrimer with P2RX4; functional differences between homomeric P2RX4 and P2RX4/6 heterotrimer are minor. Interacts with AP1M2.

The protein resides in the cell membrane. Its subcellular location is the lysosome membrane. It catalyses the reaction K(+)(in) = K(+)(out). The catalysed reaction is Na(+)(in) = Na(+)(out). It carries out the reaction Ca(2+)(in) = Ca(2+)(out). With respect to regulation, activated by ATP. pH-dependent and inhibited by acidic pH. Functionally, ATP-gated nonselective transmembrane cation channel permeable to potassium, sodium and calcium. CTP, but not GTP or UTP, functions as a weak affinity agonist for P2RX4. Activated by extracellularly released ATP, it plays multiple role in immunity and central nervous system physiology. Plays a key role in initial steps of T-cell activation and Ca(2+) microdomain formation. Also participates in basal T-cell activity without TCR/CD3 stimulation. Promotes the differentiation and activation of Th17 cells via expression of retinoic acid-related orphan receptor C/RORC. Upon activation, drives microglia motility via the PI3K/Akt pathway. Could also function as an ATP-gated cation channel of lysosomal membranes. The sequence is that of P2X purinoceptor 4 (P2rx4) from Mus musculus (Mouse).